The primary structure comprises 35 residues: Probable protein L3 (35 aa).

This Odocoileus virginianus papillomavirus 1 (DPV) protein is Probable protein L3.